Here is a 189-residue protein sequence, read N- to C-terminus: Peptidyl-tRNA hydrolase (189 aa).

Tyr14 contributes to the tRNA binding site. His19 serves as the catalytic Proton acceptor. The tRNA site is built by Tyr64, Asn66, and Asn112.

Belongs to the PTH family. As to quaternary structure, monomer.

The protein resides in the cytoplasm. It catalyses the reaction an N-acyl-L-alpha-aminoacyl-tRNA + H2O = an N-acyl-L-amino acid + a tRNA + H(+). Hydrolyzes ribosome-free peptidyl-tRNAs (with 1 or more amino acids incorporated), which drop off the ribosome during protein synthesis, or as a result of ribosome stalling. Its function is as follows. Catalyzes the release of premature peptidyl moieties from peptidyl-tRNA molecules trapped in stalled 50S ribosomal subunits, and thus maintains levels of free tRNAs and 50S ribosomes. In Brevibacillus brevis (strain 47 / JCM 6285 / NBRC 100599), this protein is Peptidyl-tRNA hydrolase.